We begin with the raw amino-acid sequence, 364 residues long: Aminomethyltransferase (364 aa).

This sequence belongs to the GcvT family. In terms of assembly, the glycine cleavage system is composed of four proteins: P, T, L and H.

The catalysed reaction is N(6)-[(R)-S(8)-aminomethyldihydrolipoyl]-L-lysyl-[protein] + (6S)-5,6,7,8-tetrahydrofolate = N(6)-[(R)-dihydrolipoyl]-L-lysyl-[protein] + (6R)-5,10-methylene-5,6,7,8-tetrahydrofolate + NH4(+). The glycine cleavage system catalyzes the degradation of glycine. The polypeptide is Aminomethyltransferase (Shigella dysenteriae serotype 1 (strain Sd197)).